Reading from the N-terminus, the 348-residue chain is Transmembrane protease serine 12 (348 aa).

The signal sequence occupies residues 1–20 (MRLGLLSVALLFVGSSHLYS). At 21-324 (DHYSPSGRHR…EHFFHASTQG (304 aa)) the chain is on the extracellular side. The interval 24 to 46 (SPSGRHRLGPSPEPAASSQQAEA) is disordered. Residues 78–318 (IIGGTEAQAG…YQKWLTEHFF (241 aa)) form the Peptidase S1 domain. Cys107 and Cys123 are joined by a disulfide. Active-site charge relay system residues include His122 and Asp171. Intrachain disulfides connect Cys206–Cys274, Cys237–Cys253, and Cys264–Cys294. Residues Asn219 and Asn249 are each glycosylated (N-linked (GlcNAc...) asparagine). Ser268 acts as the Charge relay system in catalysis. Residues 325 to 345 (ILTINILRGQILIALCFVILL) form a helical membrane-spanning segment. Topologically, residues 346–348 (ATT) are cytoplasmic.

It belongs to the peptidase S1 family. As to expression, in testis, expressed in spermatocytes and spermatids (at protein level).

It is found in the cell membrane. The protein resides in the cytoplasmic vesicle. The protein localises to the secretory vesicle. Its subcellular location is the acrosome. Its function is as follows. Required for male fertility. Plays a critical role in sperm capacitation and acrosome reactions during fertilization, and also plays a role in the regulation of proteins involved in spermatogenesis. Regulates protein pathways that promote chromosomal synapsis formation, double-strand break repair, formation of the inner mitochondrial membrane cristae and apoptosis in developing sperm. Required for normal sperm motility and binding to the zona pellucida, potentially via a role in ADAM3 protein maturation. The polypeptide is Transmembrane protease serine 12 (Homo sapiens (Human)).